The following is a 444-amino-acid chain: Phosphoglucosamine mutase (444 aa).

Ser-102 acts as the Phosphoserine intermediate in catalysis. Mg(2+) is bound by residues Ser-102, Asp-241, Asp-243, and Asp-245. At Ser-102 the chain carries Phosphoserine.

The protein belongs to the phosphohexose mutase family. It depends on Mg(2+) as a cofactor. Post-translationally, activated by phosphorylation.

It catalyses the reaction alpha-D-glucosamine 1-phosphate = D-glucosamine 6-phosphate. Its function is as follows. Catalyzes the conversion of glucosamine-6-phosphate to glucosamine-1-phosphate. This chain is Phosphoglucosamine mutase, found in Erwinia tasmaniensis (strain DSM 17950 / CFBP 7177 / CIP 109463 / NCPPB 4357 / Et1/99).